Reading from the N-terminus, the 68-residue chain is Beta-toxin Cl13 (68 aa).

Residues 1–66 (KEGYLVDYHT…VWPLPNKRCK (66 aa)) enclose the LCN-type CS-alpha/beta domain. 4 disulfide bridges follow: cysteine 12–cysteine 65, cysteine 16–cysteine 41, cysteine 25–cysteine 46, and cysteine 29–cysteine 48. Lysine 66 is modified (lysine amide).

This sequence belongs to the long (4 C-C) scorpion toxin superfamily. Sodium channel inhibitor family. Beta subfamily. As to expression, expressed by the venom gland.

It localises to the secreted. Beta toxins bind voltage-independently at site-4 of sodium channels (Nav) and shift the voltage of activation toward more negative potentials thereby affecting sodium channel activation and promoting spontaneous and repetitive firing. Inhibits sodium channels Nav1.4/SCN4A, Nav1.5/SCN5A and Nav1.6/SCN8A. Also has a weak inhibitory effect on Nav1.2/SCN2A. Is lethal to mice. In Centruroides limpidus (Mexican scorpion), this protein is Beta-toxin Cl13.